The chain runs to 89 residues: UPF0237 protein DIP1286 (89 aa).

In terms of domain architecture, ACT spans 4-78; that stretch reads IISVTGADHT…KDQNLVIRIQ (75 aa).

Belongs to the UPF0237 family.

The chain is UPF0237 protein DIP1286 from Corynebacterium diphtheriae (strain ATCC 700971 / NCTC 13129 / Biotype gravis).